The following is a 470-amino-acid chain: Glutamate--tRNA ligase (470 aa).

The short motif at 12–22 (PSPTGIFHVGG) is the 'HIGH' region element. The Zn(2+) site is built by Cys-103, Cys-105, Cys-125, and Asp-127. Positions 236–240 (KLSKR) match the 'KMSKS' region motif. Residue Lys-239 coordinates ATP.

It belongs to the class-I aminoacyl-tRNA synthetase family. Glutamate--tRNA ligase type 1 subfamily. Monomer. It depends on Zn(2+) as a cofactor.

It is found in the cytoplasm. It carries out the reaction tRNA(Glu) + L-glutamate + ATP = L-glutamyl-tRNA(Glu) + AMP + diphosphate. In terms of biological role, catalyzes the attachment of glutamate to tRNA(Glu) in a two-step reaction: glutamate is first activated by ATP to form Glu-AMP and then transferred to the acceptor end of tRNA(Glu). The sequence is that of Glutamate--tRNA ligase from Frankia alni (strain DSM 45986 / CECT 9034 / ACN14a).